A 423-amino-acid polypeptide reads, in one-letter code: Riboflavin biosynthesis protein RibBA (423 aa).

The DHBP synthase stretch occupies residues 1 to 204 (MTRLDSVERA…IADLIEWRRK (204 aa)). D-ribulose 5-phosphate contacts are provided by residues 28–29 (RE), aspartate 33, 141–145 (RPGHT), and glutamate 165. Glutamate 29 provides a ligand contact to Mg(2+). Histidine 144 is a binding site for Mg(2+). Residues 205-423 (HEKHIARVAE…AVPGEFGGAV (219 aa)) form a GTP cyclohydrolase II region. Residue 259-263 (RVHSE) coordinates GTP. Zn(2+) contacts are provided by cysteine 264, cysteine 275, and cysteine 277. Residues glutamine 280, 303-305 (EGR), and threonine 325 each bind GTP. Aspartate 337 functions as the Proton acceptor; for GTP cyclohydrolase activity in the catalytic mechanism. Arginine 339 functions as the Nucleophile; for GTP cyclohydrolase activity in the catalytic mechanism. The GTP site is built by threonine 360 and lysine 365.

It in the N-terminal section; belongs to the DHBP synthase family. This sequence in the C-terminal section; belongs to the GTP cyclohydrolase II family. Mg(2+) is required as a cofactor. Mn(2+) serves as cofactor. Requires Zn(2+) as cofactor.

It carries out the reaction D-ribulose 5-phosphate = (2S)-2-hydroxy-3-oxobutyl phosphate + formate + H(+). The catalysed reaction is GTP + 4 H2O = 2,5-diamino-6-hydroxy-4-(5-phosphoribosylamino)-pyrimidine + formate + 2 phosphate + 3 H(+). It functions in the pathway cofactor biosynthesis; riboflavin biosynthesis; 2-hydroxy-3-oxobutyl phosphate from D-ribulose 5-phosphate: step 1/1. It participates in cofactor biosynthesis; riboflavin biosynthesis; 5-amino-6-(D-ribitylamino)uracil from GTP: step 1/4. Catalyzes the conversion of D-ribulose 5-phosphate to formate and 3,4-dihydroxy-2-butanone 4-phosphate. Its function is as follows. Catalyzes the conversion of GTP to 2,5-diamino-6-ribosylamino-4(3H)-pyrimidinone 5'-phosphate (DARP), formate and pyrophosphate. The polypeptide is Riboflavin biosynthesis protein RibBA (Mycolicibacterium gilvum (strain PYR-GCK) (Mycobacterium gilvum (strain PYR-GCK))).